The primary structure comprises 111 residues: Large ribosomal subunit protein uL22 (111 aa).

This sequence belongs to the universal ribosomal protein uL22 family. In terms of assembly, part of the 50S ribosomal subunit.

Its function is as follows. This protein binds specifically to 23S rRNA; its binding is stimulated by other ribosomal proteins, e.g. L4, L17, and L20. It is important during the early stages of 50S assembly. It makes multiple contacts with different domains of the 23S rRNA in the assembled 50S subunit and ribosome. In terms of biological role, the globular domain of the protein is located near the polypeptide exit tunnel on the outside of the subunit, while an extended beta-hairpin is found that lines the wall of the exit tunnel in the center of the 70S ribosome. The protein is Large ribosomal subunit protein uL22 of Geobacter sulfurreducens (strain ATCC 51573 / DSM 12127 / PCA).